The sequence spans 129 residues: Large ribosomal subunit protein bL20 (129 aa).

It belongs to the bacterial ribosomal protein bL20 family.

Its function is as follows. Binds directly to 23S ribosomal RNA and is necessary for the in vitro assembly process of the 50S ribosomal subunit. It is not involved in the protein synthesizing functions of that subunit. This is Large ribosomal subunit protein bL20 from Kineococcus radiotolerans (strain ATCC BAA-149 / DSM 14245 / SRS30216).